Consider the following 968-residue polypeptide: RNA polymerase-associated protein RapA (968 aa).

Residues 163–332 (EVGRRYAPRV…FARLRLLDPD (170 aa)) form the Helicase ATP-binding domain. 176–183 (DEVGLGKT) serves as a coordination point for ATP. The DEAH box motif lies at 278-281 (DEAH). In terms of domain architecture, Helicase C-terminal spans 491 to 641 (RVDWLIAFLK…AFELTCPSGH (151 aa)).

Belongs to the SNF2/RAD54 helicase family. RapA subfamily. In terms of assembly, interacts with the RNAP. Has a higher affinity for the core RNAP than for the holoenzyme. Its ATPase activity is stimulated by binding to RNAP.

Functionally, transcription regulator that activates transcription by stimulating RNA polymerase (RNAP) recycling in case of stress conditions such as supercoiled DNA or high salt concentrations. Probably acts by releasing the RNAP, when it is trapped or immobilized on tightly supercoiled DNA. Does not activate transcription on linear DNA. Probably not involved in DNA repair. The polypeptide is RNA polymerase-associated protein RapA (Shewanella denitrificans (strain OS217 / ATCC BAA-1090 / DSM 15013)).